The following is a 948-amino-acid chain: ATP-dependent RNA helicase DBP7 (948 aa).

A disordered region spans residues 43–160 (KSMKANHLTV…GPSRPHPAEK (118 aa)). 2 stretches are compositionally biased toward polar residues: residues 50–62 (LTVQ…TVSA) and 77–89 (TSAS…QPKS). Positions 200 to 229 (TTFQGLGLNKLLINHLKGKMGVEKPTGIQR) match the Q motif motif. Positions 250–476 (GPKEEPLRDV…GAALRDPVLF (227 aa)) constitute a Helicase ATP-binding domain. 263–270 (AQTGSGKT) provides a ligand contact to ATP. The short motif at 397–400 (DEAD) is the DEAD box element. 2 disordered regions span residues 583–626 (MGQQ…AKSK) and 844–929 (ALSA…AATG). The span at 593-604 (EKEEDEEEEGES) shows a compositional bias: acidic residues. Residues 597-757 (DEEEEGESVE…GVNLGQVGVE (161 aa)) form the Helicase C-terminal domain. Composition is skewed to basic and acidic residues over residues 605–616 (VEERESDGESKA) and 878–899 (ERGG…EAVR).

Belongs to the DEAD box helicase family. DDX31/DBP7 subfamily.

The protein resides in the nucleus. The protein localises to the nucleolus. The catalysed reaction is ATP + H2O = ADP + phosphate + H(+). Its function is as follows. ATP-binding RNA helicase involved in the biogenesis of 60S ribosomal subunits and is required for the normal formation of 25S and 5.8S rRNAs. This is ATP-dependent RNA helicase DBP7 (DBP7) from Cryptococcus neoformans var. neoformans serotype D (strain B-3501A) (Filobasidiella neoformans).